The sequence spans 69 residues: DNA-directed RNA polymerase subunit omega (69 aa).

It belongs to the RNA polymerase subunit omega family. In terms of assembly, the RNAP catalytic core consists of 2 alpha, 1 beta, 1 beta' and 1 omega subunit. When a sigma factor is associated with the core the holoenzyme is formed, which can initiate transcription.

The catalysed reaction is RNA(n) + a ribonucleoside 5'-triphosphate = RNA(n+1) + diphosphate. Promotes RNA polymerase assembly. Latches the N- and C-terminal regions of the beta' subunit thereby facilitating its interaction with the beta and alpha subunits. The chain is DNA-directed RNA polymerase subunit omega from Geobacter metallireducens (strain ATCC 53774 / DSM 7210 / GS-15).